We begin with the raw amino-acid sequence, 27 residues long: M-lycotoxin-Hc2a (27 aa).

In terms of tissue distribution, expressed by the venom gland.

Its subcellular location is the secreted. In terms of biological role, forms pore that permeabilize the cell membrane. Promotes efflux of calcium from synaptosomes, causes hemolysis, and dissipates voltage gradients across muscle membrane. Potently inhibits the growth of bacteria, yeast and Leishmania. May function both in the prey capture strategy as well as protection from infectious organisms arising from prey ingestion. This is M-lycotoxin-Hc2a from Hogna carolinensis (Carolina wolf spider).